The chain runs to 648 residues: ABC transporter G family member 14 (648 aa).

Positions 53–304 (LKFEEVVYKV…FSSLGFSTSL (252 aa)) constitute an ABC transporter domain. Residue 99–106 (GPSGSGKT) participates in ATP binding. N-linked (GlcNAc...) asparagine glycosylation occurs at asparagine 346. One can recognise an ABC transmembrane type-2 domain in the interval 384–590 (YQFTVLLQRG…CYKLLLGIQY (207 aa)). 7 helical membrane passes run 405–425 (LRIF…WHTP), 435–455 (LLFF…VFTF), 485–505 (LPLE…MGGL), 512–532 (FILS…LGLA), 543–562 (ATTL…GYYV), 569–591 (IVWL…IQYT), and 620–640 (LWID…MAYM).

The protein belongs to the ABC transporter superfamily. ABCG family. Eye pigment precursor importer (TC 3.A.1.204) subfamily. Forms heterodimers with ABCG11. As to expression, accumulates primarily in the pericycle and stelar cells of roots. Expressed in leaves, stems, flowers and siliques, and, at low levels, in roots. Accumulates in the phloem.

The protein resides in the cell membrane. Its function is as follows. Positive regulator of plant growth which acts as an efflux pump involved in the major root-to-shoot (acropetal) long-distance cytokinin (CK) transport via the xylem sap. Together with ABCG9 and ABCG11, required for vascular development by regulating lipid/sterol homeostasis. Involved in CK-dependent responses to oxidative stress such as hydrogen peroxide H(2)O(2). (Microbial infection) Required for SNC1-mediated defense response against the virulent pathogen Pseudomonas syringae pv. tomato DC3000 by promoting the accumulation of trans-zeatin (tZ)-type cytokinins (CK) in the shoot. This is ABC transporter G family member 14 from Arabidopsis thaliana (Mouse-ear cress).